Reading from the N-terminus, the 327-residue chain is Transaldolase (327 aa).

Lysine 132 serves as the catalytic Schiff-base intermediate with substrate.

It belongs to the transaldolase family. Type 1 subfamily. In terms of assembly, homodimer.

Its subcellular location is the cytoplasm. It catalyses the reaction D-sedoheptulose 7-phosphate + D-glyceraldehyde 3-phosphate = D-erythrose 4-phosphate + beta-D-fructose 6-phosphate. Its pathway is carbohydrate degradation; pentose phosphate pathway; D-glyceraldehyde 3-phosphate and beta-D-fructose 6-phosphate from D-ribose 5-phosphate and D-xylulose 5-phosphate (non-oxidative stage): step 2/3. Transaldolase is important for the balance of metabolites in the pentose-phosphate pathway. This chain is Transaldolase, found in Chlamydia felis (strain Fe/C-56) (Chlamydophila felis).